A 589-amino-acid polypeptide reads, in one-letter code: Probable arginine--tRNA ligase, cytoplasmic (589 aa).

Residues 121–123, His132, Tyr332, Asp336, and Gln360 contribute to the L-arginine site; that span reads SPN. The 'HIGH' region motif lies at 121 to 132; sequence SPNIAKPFHAGH. The interaction with tRNA stretch occupies residues 469-483; it reads DTGPYLQYAHARLCS.

Belongs to the class-I aminoacyl-tRNA synthetase family.

It localises to the cytoplasm. It is found in the cytosol. The catalysed reaction is tRNA(Arg) + L-arginine + ATP = L-arginyl-tRNA(Arg) + AMP + diphosphate. Its function is as follows. Forms part of a macromolecular complex that catalyzes the attachment of specific amino acids to cognate tRNAs during protein synthesis. This is Probable arginine--tRNA ligase, cytoplasmic (argS1) from Dictyostelium discoideum (Social amoeba).